A 578-amino-acid chain; its full sequence is Transmembrane protein 121B (578 aa).

Disordered stretches follow at residues 1-84 (MRPA…ESLS) and 106-129 (AGPA…PTSS). 2 stretches are compositionally biased toward low complexity: residues 8 to 17 (PRSVSSASGS) and 44 to 53 (GDSSTSTSTS). Positions 54–67 (RGGGGGRRGGGGGS) are enriched in gly residues. S167 is subject to Phosphoserine. A disordered region spans residues 529–557 (RARGGYGAPPSAPPPPPPPPQGGSQLGHC). Residues 538 to 549 (PSAPPPPPPPPQ) show a composition bias toward pro residues. The residue at position 552 (S552) is a Phosphoserine.

The protein belongs to the TMEM121 family. As to expression, widely expressed, especially in adult heart, brain, prostate, testes, peripherical blood leukocytes and fetal brain.

The sequence is that of Transmembrane protein 121B from Homo sapiens (Human).